The following is a 233-amino-acid chain: Large ribosomal subunit protein uL1 (233 aa).

The protein belongs to the universal ribosomal protein uL1 family. Part of the 50S ribosomal subunit.

Functionally, binds directly to 23S rRNA. The L1 stalk is quite mobile in the ribosome, and is involved in E site tRNA release. Its function is as follows. Protein L1 is also a translational repressor protein, it controls the translation of the L11 operon by binding to its mRNA. In Shewanella frigidimarina (strain NCIMB 400), this protein is Large ribosomal subunit protein uL1.